The primary structure comprises 1026 residues: Multidrug resistance protein MdtC (1026 aa).

The next 11 helical transmembrane spans lie at 15–35 (ILIA…LPVA), 333–353 (EVEE…FLFL), 360–380 (LIPA…MYLC), 387–407 (LSLM…IVVL), 431–451 (VGFT…PLLL), 463–483 (FAVT…TLTP), 528–548 (LVGV…IAIP), 853–873 (LILI…LYES), 897–917 (LFNA…IGIV), 953–973 (PIMM…LSGG), and 984–1004 (ITIV…TPVV).

Belongs to the resistance-nodulation-cell division (RND) (TC 2.A.6) family. MdtC subfamily. In terms of assembly, part of a tripartite efflux system composed of MdtA, MdtB and MdtC. MdtC forms a heteromultimer with MdtB.

It is found in the cell inner membrane. In Salmonella newport (strain SL254), this protein is Multidrug resistance protein MdtC.